A 330-amino-acid polypeptide reads, in one-letter code: Aspartate--ammonia ligase (330 aa).

Belongs to the class-II aminoacyl-tRNA synthetase family. AsnA subfamily.

The protein resides in the cytoplasm. The catalysed reaction is L-aspartate + NH4(+) + ATP = L-asparagine + AMP + diphosphate + H(+). It functions in the pathway amino-acid biosynthesis; L-asparagine biosynthesis; L-asparagine from L-aspartate (ammonia route): step 1/1. This is Aspartate--ammonia ligase from Streptococcus pyogenes serotype M5 (strain Manfredo).